Consider the following 230-residue polypeptide: Heptaprenylglyceryl phosphate synthase (230 aa).

Lys12 lines the sn-glycerol 1-phosphate pocket. Mg(2+) contacts are provided by Asp14 and Thr40. Sn-glycerol 1-phosphate contacts are provided by residues 159–164 (YIEYSG), Gly189, and 209–210 (GD).

It belongs to the GGGP/HepGP synthase family. Group I subfamily. As to quaternary structure, homodimer. Mg(2+) serves as cofactor.

The enzyme catalyses sn-glycerol 1-phosphate + all-trans-heptaprenyl diphosphate = 3-heptaprenyl-sn-glycero-1-phosphate + diphosphate. The protein operates within membrane lipid metabolism; glycerophospholipid metabolism. Functionally, prenyltransferase that catalyzes in vivo the transfer of the heptaprenyl moiety of heptaprenyl pyrophosphate (HepPP; 35 carbon atoms) to the C3 hydroxyl of sn-glycerol-1-phosphate (G1P), producing heptaprenylglyceryl phosphate (HepGP). This reaction is an ether-bond-formation step in the biosynthesis of archaea-type G1P-based membrane lipids found in Bacillales. To a much lesser extent, is also able to use geranylgeranyl diphosphate (GGPP; C20) as the prenyl donor. The chain is Heptaprenylglyceryl phosphate synthase from Staphylococcus aureus (strain NCTC 8325 / PS 47).